The sequence spans 530 residues: Autoinducer-2 kinase (530 aa).

Belongs to the FGGY kinase family.

Its subcellular location is the cytoplasm. It catalyses the reaction (S)-4,5-dihydroxypentane-2,3-dione + ATP = (2S)-2-hydroxy-3,4-dioxopentyl phosphate + ADP + H(+). In terms of biological role, catalyzes the phosphorylation of autoinducer-2 (AI-2) to phospho-AI-2, which subsequently inactivates the transcriptional regulator LsrR and leads to the transcription of the lsr operon. Phosphorylates the ring-open form of (S)-4,5-dihydroxypentane-2,3-dione (DPD), which is the precursor to all AI-2 signaling molecules, at the C5 position. This chain is Autoinducer-2 kinase, found in Escherichia coli (strain SMS-3-5 / SECEC).